A 239-amino-acid polypeptide reads, in one-letter code: 7-cyano-7-deazaguanine synthase (239 aa).

An ATP-binding site is contributed by 13 to 23 (LSGGQDSATCL). The Zn(2+) site is built by Cys199, Cys214, Cys217, and Cys220.

This sequence belongs to the QueC family. It depends on Zn(2+) as a cofactor.

The enzyme catalyses 7-carboxy-7-deazaguanine + NH4(+) + ATP = 7-cyano-7-deazaguanine + ADP + phosphate + H2O + H(+). The protein operates within purine metabolism; 7-cyano-7-deazaguanine biosynthesis. Functionally, catalyzes the ATP-dependent conversion of 7-carboxy-7-deazaguanine (CDG) to 7-cyano-7-deazaguanine (preQ(0)). The protein is 7-cyano-7-deazaguanine synthase of Acidovorax ebreus (strain TPSY) (Diaphorobacter sp. (strain TPSY)).